The chain runs to 42 residues: MKVMGSLKSAKSRDRDCKIVRRKGRIYVINKKKPRFKARQGY.

Belongs to the bacterial ribosomal protein bL36 family.

This chain is Large ribosomal subunit protein bL36, found in Anaplasma marginale (strain St. Maries).